Consider the following 238-residue polypeptide: Ribitol-5-phosphate cytidylyltransferase (238 aa).

CTP contacts are provided by residues 7–10 (LAGG) and 81–87 (GSDRNET).

This sequence belongs to the IspD/TarI cytidylyltransferase family. TarI subfamily.

The enzyme catalyses D-ribitol 5-phosphate + CTP + H(+) = CDP-L-ribitol + diphosphate. Its pathway is cell wall biogenesis; poly(ribitol phosphate) teichoic acid biosynthesis. Functionally, catalyzes the transfer of the cytidylyl group of CTP to D-ribitol 5-phosphate. This is Ribitol-5-phosphate cytidylyltransferase from Staphylococcus saprophyticus subsp. saprophyticus (strain ATCC 15305 / DSM 20229 / NCIMB 8711 / NCTC 7292 / S-41).